A 2188-amino-acid polypeptide reads, in one-letter code: Genome polyprotein (2188 aa).

The Cell attachment site signature appears at 772–774 (RGD). An LRAT domain is found at 795 to 889 (LAYLDRGFYK…DIFGTHTLSQ (95 aa)). The active-site For protein 2A H-NC is His805. The For protein 2A H-NC; Acyl-thioester intermediate role is filled by Cys874. The SF3 helicase domain maps to 1165–1326 (FQELARIPNR…KAYSKSGKLN (162 aa)). An ATP-binding site is contributed by 1193-1200 (GEPGQGKS). At Tyr1502 the chain carries O-(5'-phospho-RNA)-tyrosine. Residues 1526-1716 (APYDGQLEHI…IPFNFLKNDM (191 aa)) form the Peptidase C3 domain. Residues His1566, Asp1604, and Cys1678 each act as for protease 3C activity in the active site. Residue Cys1905 is the Acyl-thioester intermediate of the active site. One can recognise a RdRp catalytic domain in the interval 1953-2067 (DYNYEMDYSQ…SLDREIEPER (115 aa)). 2 residues coordinate Mg(2+): Asp1959 and Asp2053.

This sequence belongs to the picornaviruses polyprotein family. In terms of assembly, interacts with capsid protein VP1 and capsid protein VP3 to form heterotrimeric protomers. Five protomers subsequently associate to form pentamers which serve as building blocks for the capsid. As to quaternary structure, interacts with capsid protein VP0, and capsid protein VP3 to form heterotrimeric protomers. Five protomers subsequently associate to form pentamers which serve as building blocks for the capsid. Interacts with capsid protein VP0 and capsid protein VP1 to form heterotrimeric protomers. Five protomers subsequently associate to form pentamers which serve as building blocks for the capsid. In terms of assembly, homohexamer; forms a hexameric ring structure with 6-fold symmetry characteristic of AAA+ ATPases. As to quaternary structure, homodimer. Interacts with host ACBD3. Interacts with RNA-directed RNA polymerase. In terms of assembly, interacts with Viral protein genome-linked. Mg(2+) serves as cofactor. In terms of processing, VPg is uridylylated by the polymerase and is covalently linked to the 5'-end of genomic RNA. This uridylylated form acts as a nucleotide-peptide primer for the polymerase. Post-translationally, specific enzymatic cleavages yield mature proteins. All cleavages are catalyzed by P3C.

Its subcellular location is the virion. The protein localises to the host cytoplasm. The protein resides in the host nucleus. It localises to the host nucleolus. It is found in the host cytoplasmic vesicle membrane. The catalysed reaction is RNA(n) + a ribonucleoside 5'-triphosphate = RNA(n+1) + diphosphate. It catalyses the reaction a ribonucleoside 5'-triphosphate + H2O = a ribonucleoside 5'-diphosphate + phosphate + H(+). The enzyme catalyses Selective cleavage of Gln-|-Gly bond in the poliovirus polyprotein. In other picornavirus reactions Glu may be substituted for Gln, and Ser or Thr for Gly.. Functionally, forms an icosahedral capsid of pseudo T=3 symmetry together with capsid proteins VP1 and VP3. The capsid is 300 Angstroms in diameter, composed of 60 copies of each capsid protein and enclosing the viral positive strand RNA genome. Capsid proteins interact with host alpha-V/beta-3 integrin heterodimer to provide virion attachment target cell. This attachment induces virion internalization predominantly through clathrin-mediated endocytosis. Binds packaging signals present in the viral RNA. Forms an icosahedral capsid of pseudo T=3 symmetry together with capsid proteins VP0 and VP1. The capsid is 300 Angstroms in diameter, composed of 60 copies of each capsid protein and enclosing the viral positive strand RNA genome. Capsid proteins interact with host alpha-V/beta-3 integrin heterodimer to provide virion attachment target cell. This attachment induces virion internalization predominantly through clathrin-mediated endocytosis. Binds packaging signals present in the viral RNA. Its function is as follows. Forms an icosahedral capsid of pseudo T=3 symmetry together with capsid proteins VP0 and VP3. The capsid is 300 Angstroms in diameter, composed of 60 copies of each capsid protein and enclosing the viral positive strand RNA genome. Capsid proteins interact with host alpha-V/beta-3 integrin heterodimer to provide virion attachment target cell. This attachment induces virion internalization predominantly through clathrin-mediated endocytosis. Binds packaging signals present in the viral RNA. In terms of biological role, is not a protease. Functionally, plays an essential role in the virus replication cycle by acting as a viroporin. Creates a pore in the host endoplasmic reticulum and as a consequence releases Ca2+ in the cytoplasm of infected cell. In turn, high levels of cytoplasmic calcium may trigger membrane trafficking and transport of viral ER-associated proteins to viroplasms, sites of viral genome replication. Induces and associates with structural rearrangements of intracellular membranes. Displays RNA-binding, nucleotide binding and NTPase activities. May play a role in virion morphogenesis and viral RNA encapsidation by interacting with the capsid protein VP3. Its function is as follows. Localizes the viral replication complex to the surface of membranous vesicles. It inhibits host cell endoplasmic reticulum-to-Golgi apparatus transport and causes the disassembly of the Golgi complex, possibly through GBF1 interaction. This would result in depletion of MHC, trail receptors and IFN receptors at the host cell surface. Plays an essential role in viral RNA replication by recruiting ACBD3 and PI4KB at the viral replication sites, thereby allowing the formation of the rearranged membranous structures where viral replication takes place. In terms of biological role, acts as a primer for viral RNA replication and remains covalently bound to viral genomic RNA. VPg is uridylylated prior to priming replication into VPg-pUpU. The VPg-pUpU is then used as primer on the genomic RNA poly(A) by the RNA-dependent RNA polymerase to replicate the viral genome. Following genome release from the infecting virion in the cytoplasm, the VPg-RNA linkage is probably removed by host TDP2. During the late stage of the replication cycle, host TDP2 is excluded from sites of viral RNA synthesis and encapsidation, allowing for the generation of progeny virions. Functionally, cysteine protease that generates mature viral proteins from the precursor polyprotein. In addition to its proteolytic activity, it binds to viral RNA, and thus influences viral genome replication. RNA and substrate bind cooperatively to the protease. Replicates the viral genomic RNA on the surface of intracellular membranes. Covalently attaches UMP to a tyrosine of VPg, which is used to prime RNA synthesis. The positive stranded RNA genome is first replicated at virus induced membranous vesicles, creating a dsRNA genomic replication form. This dsRNA is then used as template to synthesize positive stranded RNA genomes. ss(+)RNA genomes are either translated, replicated or encapsidated. The chain is Genome polyprotein from Human parechovirus 5 (strain CT86-6760) (HPeV-5).